We begin with the raw amino-acid sequence, 345 residues long: Methylthioribose-1-phosphate isomerase (345 aa).

Substrate contacts are provided by residues 47-49 (RGA), R90, and Q199. The Proton donor role is filled by D240. 250-251 (NK) is a binding site for substrate.

Belongs to the eIF-2B alpha/beta/delta subunits family. MtnA subfamily.

The enzyme catalyses 5-(methylsulfanyl)-alpha-D-ribose 1-phosphate = 5-(methylsulfanyl)-D-ribulose 1-phosphate. It functions in the pathway amino-acid biosynthesis; L-methionine biosynthesis via salvage pathway; L-methionine from S-methyl-5-thio-alpha-D-ribose 1-phosphate: step 1/6. Functionally, catalyzes the interconversion of methylthioribose-1-phosphate (MTR-1-P) into methylthioribulose-1-phosphate (MTRu-1-P). The protein is Methylthioribose-1-phosphate isomerase of Crocosphaera subtropica (strain ATCC 51142 / BH68) (Cyanothece sp. (strain ATCC 51142)).